The sequence spans 158 residues: Transcription elongation factor GreA (158 aa).

A coiled-coil region spans residues 14–76 (LDQLKDELTH…EIESILKNVK (63 aa)).

This sequence belongs to the GreA/GreB family.

Functionally, necessary for efficient RNA polymerase transcription elongation past template-encoded arresting sites. The arresting sites in DNA have the property of trapping a certain fraction of elongating RNA polymerases that pass through, resulting in locked ternary complexes. Cleavage of the nascent transcript by cleavage factors such as GreA or GreB allows the resumption of elongation from the new 3'terminus. GreA releases sequences of 2 to 3 nucleotides. This chain is Transcription elongation factor GreA, found in Acholeplasma laidlawii (strain PG-8A).